Consider the following 438-residue polypeptide: 23S rRNA (uracil(1939)-C(5))-methyltransferase RlmD (438 aa).

Residues Lys8 to Lys68 enclose the TRAM domain. Residues Cys81, Cys87, Cys90, and Cys168 each coordinate [4Fe-4S] cluster. Residues Gln271, Phe300, Asn305, Glu321, Asp348, and Asp369 each contribute to the S-adenosyl-L-methionine site. Residue Cys395 is the Nucleophile of the active site.

It belongs to the class I-like SAM-binding methyltransferase superfamily. RNA M5U methyltransferase family. RlmD subfamily.

It carries out the reaction uridine(1939) in 23S rRNA + S-adenosyl-L-methionine = 5-methyluridine(1939) in 23S rRNA + S-adenosyl-L-homocysteine + H(+). Catalyzes the formation of 5-methyl-uridine at position 1939 (m5U1939) in 23S rRNA. This chain is 23S rRNA (uracil(1939)-C(5))-methyltransferase RlmD, found in Haemophilus influenzae (strain 86-028NP).